A 363-amino-acid polypeptide reads, in one-letter code: Aminomethyltransferase (363 aa).

This sequence belongs to the GcvT family. In terms of assembly, the glycine cleavage system is composed of four proteins: P, T, L and H.

The enzyme catalyses N(6)-[(R)-S(8)-aminomethyldihydrolipoyl]-L-lysyl-[protein] + (6S)-5,6,7,8-tetrahydrofolate = N(6)-[(R)-dihydrolipoyl]-L-lysyl-[protein] + (6R)-5,10-methylene-5,6,7,8-tetrahydrofolate + NH4(+). Functionally, the glycine cleavage system catalyzes the degradation of glycine. This is Aminomethyltransferase from Nitrosomonas eutropha (strain DSM 101675 / C91 / Nm57).